The following is a 327-amino-acid chain: Chlorophenol reductase (327 aa).

The signal sequence occupies residues Met-1–Ala-24. The LysM domain occupies Thr-65 to Val-110.

Requires cob(I)alamin as cofactor.

It localises to the secreted. The protein localises to the cell wall. Its subcellular location is the cell membrane. Its activity is regulated as follows. Inhibited by sulfide and to a lesser extent by nitrite. Functionally, reductive dechlorination of ortho-chlorophenols. Dechlorinates in the ortho position with respect to the hydroxyl group. This Desulfitobacterium hafniense (Desulfitobacterium frappieri) protein is Chlorophenol reductase.